The sequence spans 688 residues: Polyphosphate kinase (688 aa).

An ATP-binding site is contributed by Asn-45. Mg(2+) is bound by residues Arg-375 and Arg-405. The region spanning 430 to 464 (PGLKIHAKLFLISRKEGDDVVRYAHIGTGNFNEKT) is the PLD phosphodiesterase domain. The Phosphohistidine intermediate role is filled by His-435. The ATP site is built by Tyr-468, Arg-564, and His-592.

Belongs to the polyphosphate kinase 1 (PPK1) family. Mg(2+) is required as a cofactor. In terms of processing, an intermediate of this reaction is the autophosphorylated ppk in which a phosphate is covalently linked to a histidine residue through a N-P bond.

It catalyses the reaction [phosphate](n) + ATP = [phosphate](n+1) + ADP. In terms of biological role, catalyzes the reversible transfer of the terminal phosphate of ATP to form a long-chain polyphosphate (polyP). This is Polyphosphate kinase from Salmonella typhimurium (strain LT2 / SGSC1412 / ATCC 700720).